A 155-amino-acid polypeptide reads, in one-letter code: Endoribonuclease YbeY (155 aa).

Residues H114, H118, and H124 each coordinate Zn(2+).

The protein belongs to the endoribonuclease YbeY family. Zn(2+) is required as a cofactor.

Its subcellular location is the cytoplasm. Functionally, single strand-specific metallo-endoribonuclease involved in late-stage 70S ribosome quality control and in maturation of the 3' terminus of the 16S rRNA. The chain is Endoribonuclease YbeY from Cronobacter sakazakii (strain ATCC BAA-894) (Enterobacter sakazakii).